Here is a 379-residue protein sequence, read N- to C-terminus: Protein psi1 (379 aa).

Residues 1–70 (MVADTKLYDC…RKLYDQYGIT (70 aa)) form the J domain. 2 disordered regions span residues 69–95 (ITEG…FPGA) and 176–205 (FGGG…AQNE). Residues 81-95 (AEGGPGAGFGGFPGA) are compositionally biased toward gly residues.

Its function is as follows. Required for nuclear migration during mitosis. It is required for the normal initiation of translation. The sequence is that of Protein psi1 (psi1) from Schizosaccharomyces pombe (strain 972 / ATCC 24843) (Fission yeast).